A 114-amino-acid polypeptide reads, in one-letter code: Probable non-functional T cell receptor beta variable 5-7 (114 aa).

The signal sequence occupies residues 1–21 (MGPGLLCWVLLCPLGEGPVDA). Residues 22–114 (GVTQSPTHLI…SALYLCASSL (93 aa)) form the Ig-like domain. Cysteine 42 and cysteine 110 are joined by a disulfide. An N-linked (GlcNAc...) asparagine glycan is attached at asparagine 90.

As to quaternary structure, alpha-beta TR is a heterodimer composed of an alpha and beta chain; disulfide-linked. The alpha-beta TR is associated with the transmembrane signaling CD3 coreceptor proteins to form the TR-CD3 (TcR or TCR). The assembly of alpha-beta TR heterodimers with CD3 occurs in the endoplasmic reticulum where a single alpha-beta TR heterodimer associates with one CD3D-CD3E heterodimer, one CD3G-CD3E heterodimer and one CD247 homodimer forming a stable octameric structure. CD3D-CD3E and CD3G-CD3E heterodimers preferentially associate with TR alpha and TR beta chains, respectively. The association of the CD247 homodimer is the last step of TcR assembly in the endoplasmic reticulum and is required for transport to the cell surface.

The protein resides in the cell membrane. In terms of biological role, probable non-functional open reading frame (ORF) of V region of the variable domain of T cell receptor (TR) beta chain. Non-functional ORF generally cannot participate in the synthesis of a productive T cell receptor (TR) chain due to altered V-(D)-J or switch recombination and/or splicing site (at mRNA level) and/or conserved amino acid change (protein level). Alpha-beta T cell receptors are antigen specific receptors which are essential to the immune response and are present on the cell surface of T lymphocytes. Recognize peptide-major histocompatibility (MH) (pMH) complexes that are displayed by antigen presenting cells (APC), a prerequisite for efficient T cell adaptive immunity against pathogens. Binding of alpha-beta TR to pMH complex initiates TR-CD3 clustering on the cell surface and intracellular activation of LCK that phosphorylates the ITAM motifs of CD3G, CD3D, CD3E and CD247 enabling the recruitment of ZAP70. In turn ZAP70 phosphorylates LAT, which recruits numerous signaling molecules to form the LAT signalosome. The LAT signalosome propagates signal branching to three major signaling pathways, the calcium, the mitogen-activated protein kinase (MAPK) kinase and the nuclear factor NF-kappa-B (NF-kB) pathways, leading to the mobilization of transcription factors that are critical for gene expression and essential for T cell growth and differentiation. The T cell repertoire is generated in the thymus, by V-(D)-J rearrangement. This repertoire is then shaped by intrathymic selection events to generate a peripheral T cell pool of self-MH restricted, non-autoaggressive T cells. Post-thymic interaction of alpha-beta TR with the pMH complexes shapes TR structural and functional avidity. This Homo sapiens (Human) protein is Probable non-functional T cell receptor beta variable 5-7.